Here is a 455-residue protein sequence, read N- to C-terminus: Bifunctional protein GlmU (455 aa).

Residues 1–230 (MVNKNAIILA…FDESMGVNDR (230 aa)) are pyrophosphorylase. UDP-N-acetyl-alpha-D-glucosamine-binding positions include 9 to 12 (LAAG), K23, Q73, 78 to 79 (GT), 101 to 103 (SGD), G140, E155, N170, and N228. D103 contributes to the Mg(2+) binding site. N228 contributes to the Mg(2+) binding site. A linker region spans residues 231–251 (SALAKATKIMQKRINTQLMKD). Positions 252–455 (GVTLVDPETA…KPGYAKKLPW (204 aa)) are N-acetyltransferase. 2 residues coordinate UDP-N-acetyl-alpha-D-glucosamine: R333 and K351. The Proton acceptor role is filled by H363. UDP-N-acetyl-alpha-D-glucosamine-binding residues include Y366 and N377. Acetyl-CoA is bound by residues 386–387 (NY), S405, A423, and R440.

This sequence in the N-terminal section; belongs to the N-acetylglucosamine-1-phosphate uridyltransferase family. In the C-terminal section; belongs to the transferase hexapeptide repeat family. Homotrimer. Requires Mg(2+) as cofactor.

Its subcellular location is the cytoplasm. It carries out the reaction alpha-D-glucosamine 1-phosphate + acetyl-CoA = N-acetyl-alpha-D-glucosamine 1-phosphate + CoA + H(+). The catalysed reaction is N-acetyl-alpha-D-glucosamine 1-phosphate + UTP + H(+) = UDP-N-acetyl-alpha-D-glucosamine + diphosphate. The protein operates within nucleotide-sugar biosynthesis; UDP-N-acetyl-alpha-D-glucosamine biosynthesis; N-acetyl-alpha-D-glucosamine 1-phosphate from alpha-D-glucosamine 6-phosphate (route II): step 2/2. It functions in the pathway nucleotide-sugar biosynthesis; UDP-N-acetyl-alpha-D-glucosamine biosynthesis; UDP-N-acetyl-alpha-D-glucosamine from N-acetyl-alpha-D-glucosamine 1-phosphate: step 1/1. It participates in bacterial outer membrane biogenesis; LPS lipid A biosynthesis. In terms of biological role, catalyzes the last two sequential reactions in the de novo biosynthetic pathway for UDP-N-acetylglucosamine (UDP-GlcNAc). The C-terminal domain catalyzes the transfer of acetyl group from acetyl coenzyme A to glucosamine-1-phosphate (GlcN-1-P) to produce N-acetylglucosamine-1-phosphate (GlcNAc-1-P), which is converted into UDP-GlcNAc by the transfer of uridine 5-monophosphate (from uridine 5-triphosphate), a reaction catalyzed by the N-terminal domain. The protein is Bifunctional protein GlmU of Limosilactobacillus fermentum (strain NBRC 3956 / LMG 18251) (Lactobacillus fermentum).